Here is a 257-residue protein sequence, read N- to C-terminus: Ribonuclease HII (257 aa).

In terms of domain architecture, RNase H type-2 spans 72–257 (TYIAGIDEVG…FAPIKDMIKK (186 aa)). Positions 78, 79, and 170 each coordinate a divalent metal cation.

It belongs to the RNase HII family. Mn(2+) serves as cofactor. Mg(2+) is required as a cofactor.

It localises to the cytoplasm. The enzyme catalyses Endonucleolytic cleavage to 5'-phosphomonoester.. In terms of biological role, endonuclease that specifically degrades the RNA of RNA-DNA hybrids. In Bacillus anthracis (strain A0248), this protein is Ribonuclease HII.